The chain runs to 819 residues: Lysine-specific demethylase JMJ18 (819 aa).

Positions 1–39 are disordered; sequence MENPPLESEIKEDMSLKNHPPDKDKDKDTIMEQPSSPRH. The span at 8–30 shows a compositional bias: basic and acidic residues; the sequence is SEIKEDMSLKNHPPDKDKDKDTI. The 42-residue stretch at 59–100 folds into the JmjN domain; the sequence is APVFTPSLEEFVDPLAYIEKIRPLAEPYGICRIIPPSTWKPP. The interval 120-171 is disordered; the sequence is TVDLLQNREPMKKKPKSRKRKRRRNSRMGSSKRRSGSSPAESTSSPEAEEKF. Residues 130–137 carry the Nuclear localization signal motif; sequence MKKKPKSR. Positions 130 to 154 are enriched in basic residues; the sequence is MKKKPKSRKRKRRRNSRMGSSKRRS. Positions 155-165 are enriched in low complexity; it reads GSSPAESTSSP. The JmjC domain maps to 261–427; sequence QYTLSGWNLN…HGQNAVELYS (167 aa). 3 residues coordinate Fe cation: histidine 307, glutamate 309, and histidine 395. Zn(2+) is bound by residues cysteine 519, cysteine 522, cysteine 533, cysteine 535, cysteine 542, histidine 545, cysteine 550, and cysteine 552. The segment at 519–571 adopts a C5HC2 zinc-finger fold; that stretch reads CFSCFYDLHLSASGCKCSPEEYACLKHADDLCSCDVKDGFILLRYTMDELSSL. The FYR N-terminal domain occupies 644–702; it reads ASENLGVSVEPINLGFLIFGKLWCNKYAIFPKGFRSRVKFYNVLDPTRMSNYISEVLDA. The region spanning 704–788 is the FYR C-terminal domain; the sequence is LMGPLFRVTL…HRLVEYWNHK (85 aa).

Belongs to the JARID1 histone demethylase family. Requires Fe(2+) as cofactor. As to expression, expressed in vascular tissues of roots, cotyledons, leaves and flowers. Expressed predominantly in phloem companion cells of roots. Present in inflorescences, roots, siliques, leaves and stems.

The protein localises to the nucleus. The enzyme catalyses N(6),N(6),N(6)-trimethyl-L-lysyl(4)-[histone H3] + 2-oxoglutarate + O2 = N(6),N(6)-dimethyl-L-lysyl(4)-[histone H3] + formaldehyde + succinate + CO2. It carries out the reaction N(6),N(6)-dimethyl-L-lysyl(4)-[histone H3] + 2-oxoglutarate + O2 = N(6)-methyl-L-lysyl(4)-[histone H3] + formaldehyde + succinate + CO2. Functionally, histone demethylase that demethylates 'Lys-4' (H3K4me) of histone H3 with a specific activity for H3K4me3 and H3K4me2. No activity on H3K9me3/2, H3K27me3/2 and H3K36me3/2. Involved in the control of flowering time by demethylating H3K4me3 at the FLC locus and repressing its expression. The repression of FLC level and reduction in H3K4me3 at the FLC locus results in induction of the flowering activator FT, which is a downstream target of FLC. The chain is Lysine-specific demethylase JMJ18 from Arabidopsis thaliana (Mouse-ear cress).